Consider the following 474-residue polypeptide: Glutamate--tRNA ligase (474 aa).

A 'HIGH' region motif is present at residues 9–19; it reads PSPTGFLHVGG. Positions 240–244 match the 'KMSKS' region motif; that stretch reads KLSKR. K243 serves as a coordination point for ATP.

The protein belongs to the class-I aminoacyl-tRNA synthetase family. Glutamate--tRNA ligase type 1 subfamily. Monomer.

The protein resides in the cytoplasm. It catalyses the reaction tRNA(Glu) + L-glutamate + ATP = L-glutamyl-tRNA(Glu) + AMP + diphosphate. Its function is as follows. Catalyzes the attachment of glutamate to tRNA(Glu) in a two-step reaction: glutamate is first activated by ATP to form Glu-AMP and then transferred to the acceptor end of tRNA(Glu). This Photobacterium profundum (strain SS9) protein is Glutamate--tRNA ligase.